We begin with the raw amino-acid sequence, 1086 residues long: 1,2-beta-oligoglucan phosphorylase (1086 aa).

Catalysis depends on D741, which acts as the Proton donor.

It belongs to the glycosyl hydrolase 94 family. As to quaternary structure, monomer.

The catalysed reaction is [(1-&gt;2)-beta-D-glucosyl](n) + phosphate = [(1-&gt;2)-beta-D-glucosyl](n-1) + alpha-D-glucose 1-phosphate. Functionally, catalyzes the reversible phosphorolysis of beta-(1-&gt;2)-D-glucans. The minimum length of the substrate for the phosphorolytic reaction is 3 D-glucose units. The sequence is that of 1,2-beta-oligoglucan phosphorylase from Listeria innocua serovar 6a (strain ATCC BAA-680 / CLIP 11262).